Here is a 449-residue protein sequence, read N- to C-terminus: Phosphoglucosamine mutase (449 aa).

Catalysis depends on S102, which acts as the Phosphoserine intermediate. Residues S102, D243, D245, and D247 each contribute to the Mg(2+) site. Position 102 is a phosphoserine (S102).

The protein belongs to the phosphohexose mutase family. Requires Mg(2+) as cofactor. Post-translationally, activated by phosphorylation.

It catalyses the reaction alpha-D-glucosamine 1-phosphate = D-glucosamine 6-phosphate. Catalyzes the conversion of glucosamine-6-phosphate to glucosamine-1-phosphate. This chain is Phosphoglucosamine mutase, found in Maricaulis maris (strain MCS10) (Caulobacter maris).